The sequence spans 73 residues: Potassium channel toxin alpha-KTx 27.4 (73 aa).

Positions 1-26 (MKFLFLTLVLLYFTAILVFIVFPSYA) are cleaved as a signal peptide.

It belongs to the short scorpion toxin superfamily. Potassium channel inhibitor family. Alpha-KTx 27 subfamily. In terms of processing, contains 4 disulfide bonds. Expressed by the venom gland.

It localises to the secreted. The chain is Potassium channel toxin alpha-KTx 27.4 from Mesobuthus gibbosus (Mediterranean checkered scorpion).